The sequence spans 39 residues: Photosystem II reaction center protein J (39 aa).

Residues 7 to 27 (IPLWLIGTIVGILVIGLIGIY) form a helical membrane-spanning segment.

The protein belongs to the PsbJ family. As to quaternary structure, PSII is composed of 1 copy each of membrane proteins PsbA, PsbB, PsbC, PsbD, PsbE, PsbF, PsbH, PsbI, PsbJ, PsbK, PsbL, PsbM, PsbT, PsbX, PsbY, PsbZ, Psb30/Ycf12, at least 3 peripheral proteins of the oxygen-evolving complex and a large number of cofactors. It forms dimeric complexes.

The protein localises to the plastid. It localises to the chloroplast thylakoid membrane. In terms of biological role, one of the components of the core complex of photosystem II (PSII). PSII is a light-driven water:plastoquinone oxidoreductase that uses light energy to abstract electrons from H(2)O, generating O(2) and a proton gradient subsequently used for ATP formation. It consists of a core antenna complex that captures photons, and an electron transfer chain that converts photonic excitation into a charge separation. This Welwitschia mirabilis (Tree tumbo) protein is Photosystem II reaction center protein J.